The following is a 424-amino-acid chain: Enolase (424 aa).

Residue Q162 coordinates (2R)-2-phosphoglycerate. E204 functions as the Proton donor in the catalytic mechanism. Residues D241, E284, and D311 each coordinate Mg(2+). K336, R365, S366, and K387 together coordinate (2R)-2-phosphoglycerate. K336 acts as the Proton acceptor in catalysis.

The protein belongs to the enolase family. Requires Mg(2+) as cofactor.

The protein resides in the cytoplasm. It localises to the secreted. Its subcellular location is the cell surface. It carries out the reaction (2R)-2-phosphoglycerate = phosphoenolpyruvate + H2O. The protein operates within carbohydrate degradation; glycolysis; pyruvate from D-glyceraldehyde 3-phosphate: step 4/5. Catalyzes the reversible conversion of 2-phosphoglycerate (2-PG) into phosphoenolpyruvate (PEP). It is essential for the degradation of carbohydrates via glycolysis. The sequence is that of Enolase from Mesorhizobium japonicum (strain LMG 29417 / CECT 9101 / MAFF 303099) (Mesorhizobium loti (strain MAFF 303099)).